The sequence spans 80 residues: Cortexin-3 (80 aa).

The chain crosses the membrane as a helical span at residues 28-48 (TTFVFVILLFIFLGILIVRCF).

This sequence belongs to the cortexin family.

It is found in the membrane. The protein is Cortexin-3 (Ctxn3) of Mus musculus (Mouse).